Reading from the N-terminus, the 476-residue chain is ATP synthase subunit beta (476 aa).

ATP is bound at residue 157 to 164 (GGAGVGKT).

It belongs to the ATPase alpha/beta chains family. In terms of assembly, F-type ATPases have 2 components, CF(1) - the catalytic core - and CF(0) - the membrane proton channel. CF(1) has five subunits: alpha(3), beta(3), gamma(1), delta(1), epsilon(1). CF(0) has three main subunits: a(1), b(2) and c(9-12). The alpha and beta chains form an alternating ring which encloses part of the gamma chain. CF(1) is attached to CF(0) by a central stalk formed by the gamma and epsilon chains, while a peripheral stalk is formed by the delta and b chains.

Its subcellular location is the cell membrane. The enzyme catalyses ATP + H2O + 4 H(+)(in) = ADP + phosphate + 5 H(+)(out). Produces ATP from ADP in the presence of a proton gradient across the membrane. The catalytic sites are hosted primarily by the beta subunits. The polypeptide is ATP synthase subunit beta (Mycoplasma genitalium (strain ATCC 33530 / DSM 19775 / NCTC 10195 / G37) (Mycoplasmoides genitalium)).